The primary structure comprises 103 residues: Large ribosomal subunit protein mL63 (103 aa).

This sequence belongs to the mitochondrion-specific ribosomal protein mL63 family.

The protein localises to the mitochondrion. This chain is Large ribosomal subunit protein mL63 (mrpl57), found in Danio rerio (Zebrafish).